A 408-amino-acid chain; its full sequence is Acetate kinase (408 aa).

Residue Asn10 participates in Mg(2+) binding. Lys17 contacts ATP. Arg96 is a substrate binding site. Asp153 acts as the Proton donor/acceptor in catalysis. ATP-binding positions include 213–217 (HLGNG) and 288–290 (DLR). Glu393 provides a ligand contact to Mg(2+).

It belongs to the acetokinase family. As to quaternary structure, homodimer. Mg(2+) is required as a cofactor. It depends on Mn(2+) as a cofactor.

The protein localises to the cytoplasm. It catalyses the reaction acetate + ATP = acetyl phosphate + ADP. It functions in the pathway metabolic intermediate biosynthesis; acetyl-CoA biosynthesis; acetyl-CoA from acetate: step 1/2. In terms of biological role, catalyzes the formation of acetyl phosphate from acetate and ATP. Can also catalyze the reverse reaction. The polypeptide is Acetate kinase (Borrelia duttonii (strain Ly)).